We begin with the raw amino-acid sequence, 130 residues long: Small ribosomal subunit protein uS9 (130 aa).

Belongs to the universal ribosomal protein uS9 family.

The polypeptide is Small ribosomal subunit protein uS9 (Onion yellows phytoplasma (strain OY-M)).